The sequence spans 146 residues: MFRASSFHTIDPKGRIIVPARFRDDIRAGGADGVMVSILDKALYAYTFNEWQAIEKKILSAKSEPMRRFKRFFLGNACECLCDKQGRILIPPSIRAYAGLEKEIVLVGMLDHFEIWSREQWDRENNLMEEELEKKEVREAIASLGL.

SpoVT-AbrB domains are found at residues 5-50 (SSFH…TFNE) and 77-120 (ACEC…SREQ).

It belongs to the MraZ family. As to quaternary structure, forms oligomers.

It is found in the cytoplasm. It localises to the nucleoid. The sequence is that of Transcriptional regulator MraZ from Desulforapulum autotrophicum (strain ATCC 43914 / DSM 3382 / VKM B-1955 / HRM2) (Desulfobacterium autotrophicum).